A 1043-amino-acid chain; its full sequence is Beta-klotho (1043 aa).

Residues 1–994 are Extracellular-facing; the sequence is MKTGCAAGSP…ICSFLVEKKP (994 aa). Glycosyl hydrolase-1 regions lie at residues 77-506 and 515-965; these read LYDT…DNGF and MKGR…SSGL. Asn84, Asn122, Asn161, Asn211, Asn262, Asn308, Asn389, Asn552, Asn609, Asn700, Asn704, and Asn837 each carry an N-linked (GlcNAc...) asparagine glycan. The chain crosses the membrane as a helical span at residues 995 to 1015; the sequence is LIFFGCCFISTLAVLLSITVF. The Cytoplasmic segment spans residues 1016-1043; the sequence is HHQKRRKFQKARNLQNIPLKKGHSRVFS.

The protein belongs to the glycosyl hydrolase 1 family. Klotho subfamily. As to quaternary structure, interacts with FGF19; this interaction is direct. Interacts (via C-terminus) with FGF21; this interaction is direct. Interacts with FGFR1 and FGFR4. In terms of tissue distribution, present in liver, muscle and white adipose tissue, but not in kidney (at protein level). Expressed in liver and pancreas, and at lower levels in skin, stomach, skeletal muscle, small intestine and lung.

The protein localises to the cell membrane. Contributes to the transcriptional repression of cholesterol 7-alpha-hydroxylase (CYP7A1), the rate-limiting enzyme in bile acid synthesis. Probably inactive as a glycosidase. Increases the ability of FGFR1 and FGFR4 to bind FGF21. This is Beta-klotho (Klb) from Mus musculus (Mouse).